A 92-amino-acid chain; its full sequence is MASLVPCPNCGRRPKEEFTIKGAALSRPEADADSIDWFDYVYLRENPRGAYEEYWHHTSGCRRWLVVARDTVTHEIAACCDAAGRARSEARK.

Residues cysteine 7, cysteine 10, histidine 57, and cysteine 61 each contribute to the Zn(2+) site.

It belongs to the SoxD family. As to quaternary structure, heterotetramer composed of subunits alpha (SoxA), beta (SoxB), gamma (SoxG) and delta (SoxD).

The protein resides in the cytoplasm. It carries out the reaction sarcosine + (6S)-5,6,7,8-tetrahydrofolate + O2 = (6R)-5,10-methylene-5,6,7,8-tetrahydrofolate + glycine + H2O2. The catalysed reaction is sarcosine + O2 + H2O = formaldehyde + glycine + H2O2. Functionally, in the presence of tetrahydrofolate, catalyzes the oxidative demethylation of sarcosine to yield glycine, 5,10-methylenetetrahydrofolate and hydrogen peroxide. In the absence of tetrahydrofolate, catalyzes the oxidative demethylation of sarcosine to yield glycine, formaldehyde and hydrogen peroxide. This is Sarcosine oxidase subunit delta (soxD) from Rhizobium meliloti (strain 1021) (Ensifer meliloti).